The following is a 544-amino-acid chain: Apolipoprotein N-acyltransferase 1 (544 aa).

6 helical membrane-spanning segments follow: residues 30-50 (LNLNGFPFFAYIALIPFFLLL), 57-79 (FSFLWGAFSGALSYFIFNFWIIF), 91-111 (KYCILYSVLFFVLKIIDSYFS), 115-135 (FIFQTIAWVAFEYLNTLGFLG), 157-177 (IFGVWGISFLLVFFSACSASF), and 197-217 (PMMIWVGTFFAFILYGAFTKI). Positions 225–501 (ARIALVQPNR…KDILVADVTV (277 aa)) constitute a CN hydrolase domain. E272 functions as the Proton acceptor in the catalytic mechanism. K360 is a catalytic residue. C412 acts as the Nucleophile in catalysis. A helical transmembrane segment spans residues 514 to 534 (GDFFGVLCTIVLILNLCFIII).

This sequence belongs to the CN hydrolase family. Apolipoprotein N-acyltransferase subfamily.

It is found in the cell inner membrane. It catalyses the reaction N-terminal S-1,2-diacyl-sn-glyceryl-L-cysteinyl-[lipoprotein] + a glycerophospholipid = N-acyl-S-1,2-diacyl-sn-glyceryl-L-cysteinyl-[lipoprotein] + a 2-acyl-sn-glycero-3-phospholipid + H(+). It functions in the pathway protein modification; lipoprotein biosynthesis (N-acyl transfer). Its function is as follows. Catalyzes the phospholipid dependent N-acylation of the N-terminal cysteine of apolipoprotein, the last step in lipoprotein maturation. The chain is Apolipoprotein N-acyltransferase 1 from Treponema denticola (strain ATCC 35405 / DSM 14222 / CIP 103919 / JCM 8153 / KCTC 15104).